We begin with the raw amino-acid sequence, 345 residues long: Phosphoribosylformylglycinamidine cyclo-ligase (345 aa).

It belongs to the AIR synthase family.

The protein resides in the cytoplasm. The enzyme catalyses 2-formamido-N(1)-(5-O-phospho-beta-D-ribosyl)acetamidine + ATP = 5-amino-1-(5-phospho-beta-D-ribosyl)imidazole + ADP + phosphate + H(+). Its pathway is purine metabolism; IMP biosynthesis via de novo pathway; 5-amino-1-(5-phospho-D-ribosyl)imidazole from N(2)-formyl-N(1)-(5-phospho-D-ribosyl)glycinamide: step 2/2. This Shewanella loihica (strain ATCC BAA-1088 / PV-4) protein is Phosphoribosylformylglycinamidine cyclo-ligase.